The sequence spans 215 residues: 3-isopropylmalate dehydratase small subunit (215 aa).

The protein belongs to the LeuD family. LeuD type 1 subfamily. As to quaternary structure, heterodimer of LeuC and LeuD.

It carries out the reaction (2R,3S)-3-isopropylmalate = (2S)-2-isopropylmalate. The protein operates within amino-acid biosynthesis; L-leucine biosynthesis; L-leucine from 3-methyl-2-oxobutanoate: step 2/4. Its function is as follows. Catalyzes the isomerization between 2-isopropylmalate and 3-isopropylmalate, via the formation of 2-isopropylmaleate. The sequence is that of 3-isopropylmalate dehydratase small subunit from Xylella fastidiosa (strain M23).